The primary structure comprises 1567 residues: Putative DEAH-box ATP-dependent helicase UM11114 (1567 aa).

2 disordered regions span residues 1 to 95 and 670 to 734; these read MAPR…PGSK and ESSV…ETRR. The segment covering 10 to 20 has biased composition (polar residues); sequence IKSSGTTSSKA. Composition is skewed to low complexity over residues 39–48 and 55–73; these read TKAAKQQQTQ and AISATGSSSSSSPVAAASS. The span at 74 to 83 shows a compositional bias: gly residues; sequence AGGGGGGGQG. Composition is skewed to polar residues over residues 670-687 and 713-726; these read ESSVEATPETSRAATPTG and LQRQQRQLHTSPSY. The 179-residue stretch at 746 to 924 folds into the Helicase ATP-binding domain; it reads LGLIRSNRVV…FGKAPCISIP (179 aa). An ATP-binding site is contributed by 759–766; sequence GETGCGKT. Positions 871 to 874 match the DEAH box motif; that stretch reads DEVH. The Helicase C-terminal domain occupies 1003 to 1184; sequence VVRYVVERAE…SLFLEVKSMR (182 aa).

It belongs to the DEAD box helicase family. DEAH subfamily.

This is Putative DEAH-box ATP-dependent helicase UM11114 from Mycosarcoma maydis (Corn smut fungus).